The primary structure comprises 263 residues: Bidirectional sugar transporter SWEET3 (263 aa).

Over 1 to 7 (MGDKLRL) the chain is Extracellular. A helical membrane pass occupies residues 8–28 (SIGILGNGASLLLYTAPIVTF). One can recognise a MtN3/slv 1 domain in the interval 9-97 (IGILGNGASL…FIYFYYASPK (89 aa)). Residues 29–42 (SRVFKKKSTEEFSC) lie on the Cytoplasmic side of the membrane. The helical transmembrane segment at 43–63 (FPYVMTLFNCLIYTWYGLPIV) threads the bilayer. The Extracellular portion of the chain corresponds to 64–71 (SHLWENLP). Residues 72–92 (LVTINGVGILLESIFIFIYFY) form a helical membrane-spanning segment. Residues 93 to 103 (YASPKEKIKVG) lie on the Cytoplasmic side of the membrane. The chain crosses the membrane as a helical span at residues 104-124 (VTFVPVIVGFGLTTAISALVF). Residues 125–132 (DDHRHRKS) lie on the Extracellular side of the membrane. A helical membrane pass occupies residues 133–153 (FVGSVGLVASISMYGSPLVVM). The MtN3/slv 2 domain maps to 133 to 217 (FVGSVGLVAS…ILYFKYKNKK (85 aa)). Over 154–165 (KKVIETRSVEYM) the chain is Cytoplasmic. A helical membrane pass occupies residues 166–186 (PFYLSFFSFLASSLWLAYGLL). The Extracellular portion of the chain corresponds to 187–190 (SHDL). A helical transmembrane segment spans residues 191–211 (FLASPNMVATPLGILQLILYF). Residues 212 to 263 (KYKNKKDLAPTTMVITKRNDHDDKNKATLEFVVDVDRNSDTNEKNSNNASSI) are Cytoplasmic-facing.

This sequence belongs to the SWEET sugar transporter family. As to quaternary structure, forms heterooligomers with SWEET11, SWEET13 and SWEET17.

It localises to the cell membrane. In terms of biological role, mediates both low-affinity uptake and efflux of sugar across the plasma membrane. The sequence is that of Bidirectional sugar transporter SWEET3 from Arabidopsis thaliana (Mouse-ear cress).